We begin with the raw amino-acid sequence, 580 residues long: Arginine--tRNA ligase (580 aa).

Positions 137–147 (ANPTGPLHIGH) match the 'HIGH' region motif.

It belongs to the class-I aminoacyl-tRNA synthetase family. As to quaternary structure, monomer.

It is found in the cytoplasm. It carries out the reaction tRNA(Arg) + L-arginine + ATP = L-arginyl-tRNA(Arg) + AMP + diphosphate. This is Arginine--tRNA ligase from Anaplasma phagocytophilum (strain HZ).